The sequence spans 464 residues: Lysosomal dipeptide transporter MFSD1 (464 aa).

The Dileucine internalization motif motif lies at 11-12 (LL). Phosphoserine is present on Ser20. A run of 12 helical transmembrane segments spans residues 38-58 (LAHRLVVLSLMCFLGFGSYFC), 82-102 (LLYAWYSWPNVVLCFLGGFLI), 112-132 (TVIFSCFVCIGQVIFALGGIF), 134-154 (AFWLMELGRFVFGIGGESLAV), 190-210 (LMGWLYGKIEALLGSAGHMTL), 214-234 (LMIGCITCIFSLICALALAYL), 265-285 (LILVFVICVCYYVAVFPFIGL), 303-323 (AINSIVYIISAPMSPLFGLLV), 330-350 (IIWVLYAVAATLVSHMMLAFT), 360-380 (LLGFSYSLLACALWPMVAFIV), 391-411 (FMQSIQNLGLAVIAILAGMIL), and 417-437 (LLLEVFFIACVSLSLLAVVCL).

This sequence belongs to the major facilitator superfamily. In terms of assembly, homodimer. Interacts with lysosomal protein GLMP (via lumenal domain); the interaction starts while both proteins are still in the endoplasmic reticulum and is required for stabilization of MFSD1 in lysosomes but has no direct effect on its targeting to lysosomes or transporter activity. Post-translationally, not N-glycosylated. As to expression, in brain, expressed in the cortex, striatum hippocampus, hypothalamus, thalamus and brainstem (at protein level). Widely expressed with highest levels in kidney and spleen (at protein level).

It is found in the lysosome membrane. It catalyses the reaction L-alpha-aminoacyl-L-arginine(out) = L-alpha-aminoacyl-L-arginine(in). It carries out the reaction L-arginyl-L-alpha-amino acid(out) = L-arginyl-L-alpha-amino acid(in). The enzyme catalyses L-arginyl-glycine(out) = L-arginyl-glycine(in). The catalysed reaction is L-alpha-aminoacyl-L-lysine(out) = L-alpha-aminoacyl-L-lysine(in). It catalyses the reaction L-aspartyl-L-lysine(out) = L-aspartyl-L-lysine(in). It carries out the reaction L-alanyl-L-lysine(out) = L-alanyl-L-lysine(in). The enzyme catalyses L-lysyl-L-alpha-amino acid(out) = L-lysyl-L-alpha-amino acid(in). The catalysed reaction is L-lysyl-L-alanine(out) = L-lysyl-L-alanine(in). It catalyses the reaction L-lysyl-L-lysine(out) = L-lysyl-L-lysine(in). It carries out the reaction L-lysyl-glycine(out) = L-lysyl-glycine(in). The enzyme catalyses L-alpha-aminoacyl-L-histidine(out) = L-alpha-aminoacyl-L-histidine(in). The catalysed reaction is L-histidyl-L-alpha-amino acid(out) = L-histidyl-L-alpha-amino acid(in). It catalyses the reaction L-histidyl-glycine(out) = L-histidyl-glycine(in). In terms of biological role, lysosomal dipeptide uniporter that selectively exports lysine, arginine or histidine-containing dipeptides with a net positive charge from the lysosome lumen into the cytosol. Could play a role in a specific type of protein O-glycosylation indirectly regulating macrophages migration and tissue invasion. Also essential for liver homeostasis. This is Lysosomal dipeptide transporter MFSD1 from Mus musculus (Mouse).